A 113-amino-acid chain; its full sequence is MNIMEIEKTNRMNALFEFYAALLTDKQMNYIELYYADDYSLAEIADEFGVSRQAVYDNIKRTEKILETYEMKLHMYSDYVVRSEIFDDMIAHYPHDEYLQEKISILTSIDNRE.

Belongs to the UPF0122 family.

Might take part in the signal recognition particle (SRP) pathway. This is inferred from the conservation of its genetic proximity to ftsY/ffh. May be a regulatory protein. This is UPF0122 protein MGAS10270_Spy1030 from Streptococcus pyogenes serotype M2 (strain MGAS10270).